Reading from the N-terminus, the 121-residue chain is Large ribosomal subunit protein bL20 (121 aa).

It belongs to the bacterial ribosomal protein bL20 family.

In terms of biological role, binds directly to 23S ribosomal RNA and is necessary for the in vitro assembly process of the 50S ribosomal subunit. It is not involved in the protein synthesizing functions of that subunit. The chain is Large ribosomal subunit protein bL20 from Mycoplasma mycoides subsp. mycoides SC (strain CCUG 32753 / NCTC 10114 / PG1).